The following is a 329-amino-acid chain: Putative 1-aminocyclopropane-1-carboxylate deaminase (329 aa).

At Lys-54 the chain carries N6-(pyridoxal phosphate)lysine.

Belongs to the ACC deaminase/D-cysteine desulfhydrase family. Pyridoxal 5'-phosphate is required as a cofactor.

It catalyses the reaction 1-aminocyclopropane-1-carboxylate + H2O = 2-oxobutanoate + NH4(+). The sequence is that of Putative 1-aminocyclopropane-1-carboxylate deaminase from Pyrococcus furiosus (strain ATCC 43587 / DSM 3638 / JCM 8422 / Vc1).